We begin with the raw amino-acid sequence, 242 residues long: Platinum sensitivity protein 3 (242 aa).

Component of the SHU complex composed of at least CSM2, PSY3, SHU1 and SHU2.

The protein localises to the nucleus. In terms of biological role, required for resistance to the DNA-damaging agents methyl methanesulfonate (MMS), cisplatin and oxaliplatin, but not to mitomycin C. Plays a role in protection against mutation accumulation. May be a component of the recombination-repair pathway. The protein is Platinum sensitivity protein 3 (PSY3) of Saccharomyces cerevisiae (strain ATCC 204508 / S288c) (Baker's yeast).